We begin with the raw amino-acid sequence, 483 residues long: Glycogen synthase (483 aa).

ADP-alpha-D-glucose is bound at residue Lys18.

It belongs to the glycosyltransferase 1 family. Bacterial/plant glycogen synthase subfamily.

The enzyme catalyses [(1-&gt;4)-alpha-D-glucosyl](n) + ADP-alpha-D-glucose = [(1-&gt;4)-alpha-D-glucosyl](n+1) + ADP + H(+). Its pathway is glycan biosynthesis; glycogen biosynthesis. Functionally, synthesizes alpha-1,4-glucan chains using ADP-glucose. The chain is Glycogen synthase from Rhodopseudomonas palustris (strain ATCC BAA-98 / CGA009).